The following is a 376-amino-acid chain: Transmembrane protein 43 homolog (376 aa).

The Cytoplasmic portion of the chain corresponds to Met1 to Ser10. A helical transmembrane segment spans residues His11 to Trp31. The Lumenal portion of the chain corresponds to Asn32–Gln277. A helical membrane pass occupies residues Val278 to Cys298. Residues Asn299–Pro323 lie on the Cytoplasmic side of the membrane. A run of 2 helical transmembrane segments spans residues Val324–Ile344 and Leu345–Phe365. Residues Thr366–Asp376 lie on the Cytoplasmic side of the membrane.

Belongs to the TMEM43 family.

The protein localises to the endoplasmic reticulum membrane. Its subcellular location is the nucleus envelope. Functionally, involved in lipid metabolism and utilization. This is Transmembrane protein 43 homolog from Drosophila melanogaster (Fruit fly).